The chain runs to 310 residues: MDIVAHIQGDPGSSLTPLILIHAISGLALPYFALRPLSTDSDDGDSDKSRPVYGLSSPIFESVSAFRRHGKSLPSLALEYVRIIRREIQPRGPYLLGGWSMGGMLAIEMAAIFVAQGETVKHVVMIDSLNPEVYPPFQDSQEHQVLSTIMYNAIAWRVEGLEEACMPTLSDDASTTTSSDNSRASTDHGADSEVESEADLDDFMQQLREHVHQGMRMLASYHTLHRHIYLPDTAVTLIKCTMLGNLSPLLRASRKVFAKKNLLDPHNGWRTEQFRSFRSVPFASTHDACFDAEASEELTTILRGVLKDID.

2 helical membrane passes run 14–34 (SLTP…YFAL) and 95–115 (LLGG…IFVA). Residues 168-195 (TLSDDASTTTSSDNSRASTDHGADSEVE) are disordered. Residues 170 to 184 (SDDASTTTSSDNSRA) show a composition bias toward low complexity.

The protein belongs to the AMT4 thioesterase family.

It localises to the membrane. The protein operates within secondary metabolite biosynthesis. Thioesterase; part of the gene cluster that mediates the biosynthesis of pyranterreones, a family of antioxidative compounds. The first step of pyranonigrins biosynthesis is performed by the hybrid PKS-NRPS synthetase pytA that condenses 4 malonyl-CoA units ato the acetyl starter unit by the modular PKS of pytA. The acyl chain is then connected to an L-serine through the amide bond by the modular NRPS of pytA. A tetramic acid is formed and released from the PKS-NRPS pytA to give pyranterreone 5 with the help of the thioesterase pytI. Pyranterreone 5 could be methylated by pytC to afford pyranterreone 6. Both pyranterreones 5 and 6 are subsequently oxidized by the FAD-linked oxidoreductase pytB and the cytochrome P450 monooxygenase pytD to form the fused gamma-pyrone core, resulting in pyranterreones 7 and 11, respectively. The hydroxy group at C-8 of pyranterreones 7 and 11 are dehydrated by the aspartyl protease pytH to form a delta-7 double bond to give pyranterreones 3 and 1, 2 accordingly. The exo-methylene of pyranterreone 3 could be reduced into a pendant methyl by reductase pytE to provide pyranterreone 4, also known as cordylactam. Pyranterreone 4 can be reconverted to pyranterreone 3 through pytB-catalyzed dehydrogenation or further oxidized to pyranterreones 9 and 10. This chain is Thioesterase pytI, found in Aspergillus terreus.